Here is a 383-residue protein sequence, read N- to C-terminus: Pleckstrin homology domain-containing family A member 1 (383 aa).

PH domains follow at residues 7-112 and 191-289; these read QNRI…KAIK and AVIK…GAIV. The residue at position 284 (Val284) is a Phosphoserine. Residues 362–383 form a disordered region; that stretch reads LPRSSQGTSRSRLSLQESQLPK. Over residues 370–383 the composition is skewed to low complexity; that stretch reads SRSRLSLQESQLPK.

As to quaternary structure, interacts with MPDZ and PTPN13.

Its subcellular location is the cytoplasm. It is found in the cell membrane. It localises to the nucleus. Binds specifically to phosphatidylinositol 3,4-diphosphate (PtdIns3,4P2), but not to other phosphoinositides. May recruit other proteins to the plasma membrane. This is Pleckstrin homology domain-containing family A member 1 (Plekha1) from Mus musculus (Mouse).